A 51-amino-acid chain; its full sequence is Large ribosomal subunit protein bL33 (51 aa).

The tract at residues 1-21 (MRDKIKLESSAGTGHFYTTTK) is disordered. A compositionally biased stretch (polar residues) spans 10–20 (SAGTGHFYTTT).

This sequence belongs to the bacterial ribosomal protein bL33 family.

This is Large ribosomal subunit protein bL33 (rpmG) from Neisseria meningitidis serogroup A / serotype 4A (strain DSM 15465 / Z2491).